Consider the following 247-residue polypeptide: Pyridoxine 5'-phosphate synthase (247 aa).

Asn7 serves as a coordination point for 3-amino-2-oxopropyl phosphate. Asp9–His10 is a binding site for 1-deoxy-D-xylulose 5-phosphate. Arg18 serves as a coordination point for 3-amino-2-oxopropyl phosphate. His43 serves as the catalytic Proton acceptor. Residues Arg45 and His50 each coordinate 1-deoxy-D-xylulose 5-phosphate. The active-site Proton acceptor is the Glu70. A 1-deoxy-D-xylulose 5-phosphate-binding site is contributed by Thr100. Residue His190 is the Proton donor of the active site. Residues Gly191 and Gly212–His213 each bind 3-amino-2-oxopropyl phosphate.

This sequence belongs to the PNP synthase family. In terms of assembly, homooctamer; tetramer of dimers.

The protein localises to the cytoplasm. It catalyses the reaction 3-amino-2-oxopropyl phosphate + 1-deoxy-D-xylulose 5-phosphate = pyridoxine 5'-phosphate + phosphate + 2 H2O + H(+). It functions in the pathway cofactor biosynthesis; pyridoxine 5'-phosphate biosynthesis; pyridoxine 5'-phosphate from D-erythrose 4-phosphate: step 5/5. Catalyzes the complicated ring closure reaction between the two acyclic compounds 1-deoxy-D-xylulose-5-phosphate (DXP) and 3-amino-2-oxopropyl phosphate (1-amino-acetone-3-phosphate or AAP) to form pyridoxine 5'-phosphate (PNP) and inorganic phosphate. This Synechococcus sp. (strain WH7803) protein is Pyridoxine 5'-phosphate synthase.